A 399-amino-acid chain; its full sequence is Tyrosine--tRNA ligase (399 aa).

A 'HIGH' region motif is present at residues P44–H53. Positions K229–S233 match the 'KMSKS' region motif. K232 is an ATP binding site. Residues I338–V398 enclose the S4 RNA-binding domain.

Belongs to the class-I aminoacyl-tRNA synthetase family. TyrS type 2 subfamily. Homodimer.

The protein localises to the cytoplasm. The enzyme catalyses tRNA(Tyr) + L-tyrosine + ATP = L-tyrosyl-tRNA(Tyr) + AMP + diphosphate + H(+). Catalyzes the attachment of tyrosine to tRNA(Tyr) in a two-step reaction: tyrosine is first activated by ATP to form Tyr-AMP and then transferred to the acceptor end of tRNA(Tyr). The sequence is that of Tyrosine--tRNA ligase from Sulfurimonas denitrificans (strain ATCC 33889 / DSM 1251) (Thiomicrospira denitrificans (strain ATCC 33889 / DSM 1251)).